A 44-amino-acid polypeptide reads, in one-letter code: Photosystem I reaction center subunit IX (44 aa).

Residues 7–27 traverse the membrane as a helical segment; that stretch reads YLSVAPVLSTLWFGALAGLLI.

This sequence belongs to the PsaJ family.

The protein localises to the plastid. It is found in the chloroplast thylakoid membrane. In terms of biological role, may help in the organization of the PsaE and PsaF subunits. The protein is Photosystem I reaction center subunit IX of Solanum bulbocastanum (Wild potato).